A 395-amino-acid chain; its full sequence is Elongation factor Tu (395 aa).

Residues 10 to 204 (KPHVNIGTIG…EVDAYIPTPE (195 aa)) form the tr-type G domain. The interval 19-26 (GHVDHGKT) is G1. 19-26 (GHVDHGKT) provides a ligand contact to GTP. Thr26 serves as a coordination point for Mg(2+). Positions 60–64 (GITIS) are G2. The interval 81–84 (DCPG) is G3. GTP contacts are provided by residues 81–85 (DCPGH) and 136–139 (NKCD). The segment at 136–139 (NKCD) is G4. Residues 174–176 (SAL) form a G5 region.

It belongs to the TRAFAC class translation factor GTPase superfamily. Classic translation factor GTPase family. EF-Tu/EF-1A subfamily. Monomer.

Its subcellular location is the cytoplasm. The enzyme catalyses GTP + H2O = GDP + phosphate + H(+). GTP hydrolase that promotes the GTP-dependent binding of aminoacyl-tRNA to the A-site of ribosomes during protein biosynthesis. This is Elongation factor Tu from Bacillus cereus (strain G9842).